The chain runs to 77 residues: Large ribosomal subunit protein bL28 (77 aa).

It belongs to the bacterial ribosomal protein bL28 family.

This Albidiferax ferrireducens (strain ATCC BAA-621 / DSM 15236 / T118) (Rhodoferax ferrireducens) protein is Large ribosomal subunit protein bL28.